We begin with the raw amino-acid sequence, 959 residues long: Isoleucine--tRNA ligase (959 aa).

The 'HIGH' region motif lies at 66-76; that stretch reads PYANGDIHIGH. An L-isoleucyl-5'-AMP-binding site is contributed by glutamate 592. A 'KMSKS' region motif is present at residues 633 to 637; that stretch reads KMSKS. Lysine 636 serves as a coordination point for ATP. Cysteine 922, cysteine 925, cysteine 942, and cysteine 945 together coordinate Zn(2+).

The protein belongs to the class-I aminoacyl-tRNA synthetase family. IleS type 1 subfamily. In terms of assembly, monomer. Requires Zn(2+) as cofactor.

It localises to the cytoplasm. The catalysed reaction is tRNA(Ile) + L-isoleucine + ATP = L-isoleucyl-tRNA(Ile) + AMP + diphosphate. Catalyzes the attachment of isoleucine to tRNA(Ile). As IleRS can inadvertently accommodate and process structurally similar amino acids such as valine, to avoid such errors it has two additional distinct tRNA(Ile)-dependent editing activities. One activity is designated as 'pretransfer' editing and involves the hydrolysis of activated Val-AMP. The other activity is designated 'posttransfer' editing and involves deacylation of mischarged Val-tRNA(Ile). The chain is Isoleucine--tRNA ligase from Cupriavidus metallidurans (strain ATCC 43123 / DSM 2839 / NBRC 102507 / CH34) (Ralstonia metallidurans).